We begin with the raw amino-acid sequence, 298 residues long: GTPase Era (298 aa).

The 168-residue stretch at 4–171 (KSGFVSVIGR…LKEALDYIPE (168 aa)) folds into the Era-type G domain. The G1 stretch occupies residues 12-19 (GRPNVGKS). A GTP-binding site is contributed by 12–19 (GRPNVGKS). The interval 38–42 (QTTRN) is G2. The segment at 59–62 (DTPG) is G3. Residues 59–63 (DTPGI) and 121–124 (NKVD) contribute to the GTP site. The segment at 121 to 124 (NKVD) is G4. The tract at residues 150 to 152 (ISA) is G5. Residues 202–279 (LDDEVPHGVG…FLELWVKVKP (78 aa)) form the KH type-2 domain.

The protein belongs to the TRAFAC class TrmE-Era-EngA-EngB-Septin-like GTPase superfamily. Era GTPase family. As to quaternary structure, monomer.

The protein resides in the cytoplasm. It is found in the cell membrane. Functionally, an essential GTPase that binds both GDP and GTP, with rapid nucleotide exchange. Plays a role in 16S rRNA processing and 30S ribosomal subunit biogenesis and possibly also in cell cycle regulation and energy metabolism. This Ruminiclostridium cellulolyticum (strain ATCC 35319 / DSM 5812 / JCM 6584 / H10) (Clostridium cellulolyticum) protein is GTPase Era.